A 480-amino-acid chain; its full sequence is Siroheme synthase 2 (480 aa).

The precorrin-2 dehydrogenase /sirohydrochlorin ferrochelatase stretch occupies residues 1-202 (MDYLPMFARL…QDWQSAETWL (202 aa)). Residues 22–23 (EV) and 43–44 (PE) each bind NAD(+). Residue S126 is modified to Phosphoserine. Residues 214 to 480 (GEVVLVGAGP…GCDLKLVNLA (267 aa)) are uroporphyrinogen-III C-methyltransferase. P223 provides a ligand contact to S-adenosyl-L-methionine. D246 acts as the Proton acceptor in catalysis. K268 functions as the Proton donor in the catalytic mechanism. S-adenosyl-L-methionine contacts are provided by residues 299–301 (GGD), 329–330 (TA), M381, and G410.

In the N-terminal section; belongs to the precorrin-2 dehydrogenase / sirohydrochlorin ferrochelatase family. This sequence in the C-terminal section; belongs to the precorrin methyltransferase family.

It carries out the reaction uroporphyrinogen III + 2 S-adenosyl-L-methionine = precorrin-2 + 2 S-adenosyl-L-homocysteine + H(+). The enzyme catalyses precorrin-2 + NAD(+) = sirohydrochlorin + NADH + 2 H(+). It catalyses the reaction siroheme + 2 H(+) = sirohydrochlorin + Fe(2+). It participates in cofactor biosynthesis; adenosylcobalamin biosynthesis; precorrin-2 from uroporphyrinogen III: step 1/1. The protein operates within cofactor biosynthesis; adenosylcobalamin biosynthesis; sirohydrochlorin from precorrin-2: step 1/1. Its pathway is porphyrin-containing compound metabolism; siroheme biosynthesis; precorrin-2 from uroporphyrinogen III: step 1/1. It functions in the pathway porphyrin-containing compound metabolism; siroheme biosynthesis; siroheme from sirohydrochlorin: step 1/1. It participates in porphyrin-containing compound metabolism; siroheme biosynthesis; sirohydrochlorin from precorrin-2: step 1/1. In terms of biological role, multifunctional enzyme that catalyzes the SAM-dependent methylations of uroporphyrinogen III at position C-2 and C-7 to form precorrin-2 via precorrin-1. Then it catalyzes the NAD-dependent ring dehydrogenation of precorrin-2 to yield sirohydrochlorin. Finally, it catalyzes the ferrochelation of sirohydrochlorin to yield siroheme. This is Siroheme synthase 2 from Aeromonas salmonicida (strain A449).